A 4836-amino-acid polypeptide reads, in one-letter code: MPSESFCLAAQSRLDSKWLKTDIQLAFTRDGLCGLWNEMVKDGEIVYTGTELAQNRELPLRKDDGVDAQSGTKKEDLNDKEKKEEEETPAPVYRAKSILESWVWGRQPDVNELKECLSVLVKEQQALAVQSATTTLSALRLKQRLVILERYFIALNRTVFQENVKVKWKSSSISVPPTEKKSARPTGRGVEGLARVGSRAALSFAFAFLRRAWRSGEDADLCSELLQESLDALRALPEASLFDESTVSSVWLEVVERATRFLRSVVTGDVHGTPGTKGPGGVPLQDQHLALAILLELAVQRGTLSQMLSAILLLLQLWDSGAQETDNERSAQGTSAPLLPLLQRFQSIICSKDVPHTESDMHLLSGPLSPNESFLRYLTLPQDNELAIDLRQTAVVVMAHLDRLATPCMPPLCSSPTSHKGSLQEVIGWGLIGWKYYANVIGPIQCEGLASLGVMQVACAEKRFLILSRNGRVYTQAYNSDMLAPQLVQGLASRNIVKIAAHSDGHHYLALAATGEVYSWGCGDGGRLGHGDTVPLEEPKVISAFSGKQAGKHVVHIACGSTYSAAITAEGELYTWGRGNYGRLGHGSSEDEAIPMLVAGLKGLKVIDVACGSGDAQTLAVTENGQVWSWGDGDYGKLGRGGSDGCKTPKLIEKLQDLDVIKVRCGSQFSIALTKDGQVYSWGKGDNQRLGHGTEEHVRYPKLLEGLQGKKVIDVAAGSTHCLALTEDSEVHSWGSNDQCQHFDTLRVTKPEPTALPGLDSKHIVGIACGPAQSFAWSSCSEWSIGLRVPFVVDICSMTFEQLDLLLRQVSEGMDGTADWPPPQEKECMAVATLNLLRLQLHAAISHQVDPEFLGLGLGSVLLNSLKQTVVTLASSAGVLSTVQSAAQAVLQSGWSVLLPTAEERARALSALLPCTVSGNEVNISPGRRFMIDLLVGSLMADGGLESALNAAITAEIQDIEAKKEAQKEKEIDEQEASASTFHRSRTPLDKDLINTGIYESSGKQCLPLVQLIQQLLRNIASQTVARLKDVARRISSCLDFEQQSCERSASLDLLLRFQRLLISKLYPGEKIGPISDTSSPELMGVGSLLKKYTALVCTHIGDILPVAASIASSSWQHFAEVACVMEGDFTGVLLPELVVSIVLLLSKNASLMQEAGAIPLLGGLLEHLDRFNHLAPGKERDDHEELAWPGIMESFFTGQNCRNNEEVTLIRKADLENHNKDGGFWTVIDGKVYGIKDFQTQSLTGNSILAQFAGEDPVVALEAALQFEDTQESMHAFCVGQYLEPDQEVVTIPDLGSLSSPLIDTERNLGLLLGLHASYLAMSTPLSPVEVECAKWLQSSIFSGGLQTSQIHYSYNEEKDEDHCSSPGGTPISKSRLCSHRWALGDHSQAFLQAIADNNIQDYNVKDFLCQIERYCRQCHLTTPITFPPEHPVEEVGRLLLCCLLKHEDLGHVALSLVHVGTLGIEQVKHRTLPKSVVDVCRVVYQAKCSLIKTHQEQGRSYKEVCAPVIERLRFLFNELRPAVCSDLSIMSKFKLLGSLPRWRRIAQKIIRERRKKRVPKKPESIDSEEKIGNEESDLEEACVLPHSPINVDKRPISMKSPKDKWQPLLNTVTGVHKYKWLKQNVQGLYPQSALLNTIVEFALKEEPVDVEKMRKCLLKQLERAEVRLEGIDTILKLAAKSFLLPSVQYAMFCGWQRLIPEGIDIGEPLTDCLRDVDLIPPFNRMLLEVTFGKLYAWAVQNIRSVLMDASARFKELGIQPVPLQTITNENPAGPSLGTIPQARFLLVMLSMLTLQHGANNLDLLLNSGTLALTQTALRLIGPTCDSVEDDMNASARGASATVLEETRKETAPVQLPVSGPELAAMMKIGTRVMRGVDWKWGDQDGPPPGLGRVIGELGEDGWIRVQWDTGSTNSYRMGKEGKYDLKLVELPVSSQPSAEDSDTEDDSEAEQGERNIHPTAMMLTSVINLLQTLCLSVGVHADIMQSEATKTLCGLLRMLVESGTTDKPAPPDRLVAREQHRSWCTLGFVRSIALTPQACGALSSPRWITLLMKVVEGHAPFTAASLQRQILAVHLLQAVLPSWDKTERARDMKCLVEKLFGFLGSLLTTCSSDVPLLRESTLRKRRARPQASLTATHSSTLAEEVVGLLRTLHSLTQWNGLINKYINSQLCSVTQSYAGKTSERAQLEDYFPDSENLEVGGLMAVLAVIGGIDGRLRLGGQVMHDEFGEGTVTRITPKGRITVQFCDMRMCRVCPLNQLKPLPAVAFSVNNLPFTEPMLSVWAELVNLAGSKLEKHKTKKSAKPAFAGQVDLDLLRSQQLKLYILKAGRALLSHQDKLRQILSQPAVQGTGTLQTDDGAAASPDLGDMSPEGPQPPMILLQQLLSSATQPSPVKAIFDKQELEAAALALCQCLAVESTHPSSPGCEDCSSSEATTPVSVQHIHLARAKKRRQSPAPALPIVVQLMEMGFPRKNIEFALKSLTGTSGNASGLPGVEALVGWLLDHSDVQVTEFSDAETLSDEYSDEEVVEDVDDTPYPVAAGAVVTESQTYKKRADFLSNDDYAVYVRENVQVGMMVRCCRTYEEVCEGDVGKVIKLDRDGLHDLNVQCDWQQKGGTYWVRYIHVELIGYPPPSSSSHIKIGDKVRVKASVTTPKYKWGSVTHQSVGLVKAFSANGKDIIVDFPQQSHWTGLLSEMELVPSIHPGVTCDGCQTFPINGSRFKCRNCDDFDFCETCFKTKKHNTRHTFGRINEPGQSAVFCGRSGKQLKRCHSSQPGMLLDSWSRMVKSLNVSSSVNQASRLIDGSEPCWQSSGSQGKHWIRLEIFPDVLVHRLKMIVDPADSSYMPSLVVVSGGNSLNNLIELKTININQTDTTVPLLSDCAEYHRYIEIAIKQCRSSGIDCKIHGLILLGRIRAEEEDLAAVPFLASDNEEEEDDKGSTGSLIRKKTPGLESTATIRTKVFVWGLNDKDQLGGLKGSKIKVPSFSETLSALNVVQVAGGSKSLFAVTVEGKVYSCGEATNGRLGLGMSSGTVPIPRQITALSSYVVKKVAVHSGGRHATALTVDGKVFSWGEGDDGKLGHFSRMNCDKPRLIEALKTKRIRDIACGSSHSAALTSSGELYTWGLGEYGRLGHGDNTTQLKPKMVKVLLGHRVIQVACGSRDAQTLALTDEGLVFSWGDGDFGKLGRGGSEGCNIPQNIERLNGQGVCQIECGAQFSLALTKSGVVWTWGKGDYFRLGHGSDVHVRKPQVVEGLRGKKIVHVAVGALHCLAVTDSGQVYAWGDNDHGQQGNGTTTVNRKPTLVQGLEGQKITRVACGSSHSVAWTTVDVATPSVHEPVLFQTARDPLGASYLGVPSDADSSSSSNKISGANNCKPNRPSLAKILLSLEGNLAKQQALSHILTALQIMYARDAVVGALMPAGMLAPVECPSFSSSAPASDVSAMASPMHMEDSTLAADLEDRLSPNLWQEKREIVSSEDAVTPSAVTPSAPSASSRPFIPVTDDPGAASIIAETMTKTKEDVESQNKTSGPEPQSLDEFTSLLIPDDTRVVVELLKLSVCSRAGDKGREVLSAVLSGMGTAYPQVADMLLELCVTELEDVATDSQSGRLSSQPVVVESSHPYTDDTSTSGTVKIPGAEGLRVEFDRQCSTERRHDPLTVMDGVNRIVSVRSGREWSDWSSELRIPGDELKWKFISDGSVNGWGWRFTVYPIMPAAGPKDLLSDRCVLSCPSMDLVTCLLDFRLNLTSNRSIVPRLAASLAACAQLSALAASHRMWALQRLRRLLTTEFGQSININRLLGENDGESRALSFTGSALAALVKGLPEALQRQFEYEDPIVRGGKQLLHSPFFKVLVALACDLELDTLPCCAETHKWAWFRRYCMASRVAVALDKRTPLPRLFLDEVAKKIRELMADSESMDVLHESHSIFKREQDEQLVQWMNRRPDDWTLSAGGSGTIYGWGHNHRGQLGGIEGAKVKVPTPCEALATLRPVQLIGGEQTLFAVTADGKLYATGYGAGGRLGIGGTESVSTPTLLESIQHVFIKKVAVNSGGKHCLALSSEGEVYSWGEAEDGKLGHGNRSPCDRPRVIESLRGIEVVDVAAGGAHSACVTAAGDLYTWGKGRYGRLGHSDSEDQLKPKLVEALQGHRVIDIACGSGDAQTLCLTDDDTVWSWGDGDYGKLGRGGSDGCKVPMKIDSLTGLGVVKVECGSQFSVALTKSGAVYTWGKGDYHRLGHGSDDHVRRPRQVQGLQGKKVIAIATGSLHCVCCTEDGEVYTWGDNDEGQLGDGTTNAIQRPRLVAALQGKKVNRVACGSAHTLAWSTSKPASAGKLPAQVPMEYNHLQEIPIIALRNRLLLLHHISELFCPCIPMFDLEGSLDETGLGPSVGFDTLRGILISQGKEAAFRKVVQATMVRDRQHGPVVELNRIQVKRSRSKGGLAGPDGTKSVFGQMCAKMSSFSPDSLLLPHRVWKVKFVGESVDDCGGGYSESIAEICEELQNGLTPLLIVTPNGRDESGANRDCYLLNPATRAPVHCSMFRFLGVLLGIAIRTGSPLSLNLAEPVWKQLAGMSLTIADLSEVDKDFIPGLMYIRDNEATSEEFEAMSLPFTVPSASGQDIQLSSKHTHITLDNRAEYVRLAINYRLHEFDEQVAAVREGMARVVPVPLLSLFTGYELETMVCGSPDIPLHLLKSVATYKGIEPSASLVQWFWEVMESFSNTERSLFLRFVWGRTRLPRTIADFRGRDFVIQVLDKYNPPDHFLPESYTCFFLLKLPRYSCKQVLEEKLKYAIHFCKSIDTDDYARIALTGEPAADDSSEDSDNEDADSFASDSTQDYLTGH.

The disordered stretch occupies residues 58–90 (LPLRKDDGVDAQSGTKKEDLNDKEKKEEEETPA). Residues 72-85 (TKKEDLNDKEKKEE) show a composition bias toward basic and acidic residues. A Phosphothreonine modification is found at threonine 273. Residues 416–462 (PTSHKGSLQEVIGWGLIGWKYYANVIGPIQCEGLASLGVMQVACAEK) form an RCC1 1-1 repeat. Residues 463–513 (RFLILSRNGRVYTQAYNSDMLAPQLVQGLASRNIVKIAAHSDGHHYLALAA) form an RCC1 1-2 repeat. An RCC1 1-3 repeat occupies 514-569 (TGEVYSWGCGDGGRLGHGDTVPLEEPKVISAFSGKQAGKHVVHIACGSTYSAAITA). Residues 570–621 (EGELYTWGRGNYGRLGHGSSEDEAIPMLVAGLKGLKVIDVACGSGDAQTLAV) form an RCC1 1-4 repeat. An RCC1 1-5 repeat occupies 624 to 675 (NGQVWSWGDGDYGKLGRGGSDGCKTPKLIEKLQDLDVIKVRCGSQFSIALTK). Phosphothreonine is present on threonine 648. The stretch at 676-727 (DGQVYSWGKGDNQRLGHGTEEHVRYPKLLEGLQGKKVIDVAAGSTHCLALTE) is one RCC1 1-6 repeat. The stretch at 729 to 779 (SEVHSWGSNDQCQHFDTLRVTKPEPTALPGLDSKHIVGIACGPAQSFAWSS) is one RCC1 1-7 repeat. Positions 948 to 981 (ALNAAITAEIQDIEAKKEAQKEKEIDEQEASAST) form a coiled coil. Residues 1208-1284 (VTLIRKADLE…MHAFCVGQYL (77 aa)) enclose the Cytochrome b5 heme-binding domain. Phosphoserine is present on serine 1578. The MIB/HERC2 domain occupies 1860-1933 (SGPELAAMMK…KYDLKLVELP (74 aa)). Serine 1943 is subject to Phosphoserine. Threonine 1945 is subject to Phosphothreonine. The segment at 2351–2376 (GTGTLQTDDGAAASPDLGDMSPEGPQ) is disordered. Phosphoserine is present on serine 2455. The CPH domain occupies 2555–2631 (RADFLSNDDY…RYIHVELIGY (77 aa)). Residues 2704–2756 (HPGVTCDGCQTFPINGSRFKCRNCDDFDFCETCFKTKKHNTRHTFGRINEPGQ) form a ZZ-type zinc finger. The Zn(2+) site is built by cysteine 2709, cysteine 2712, cysteine 2724, cysteine 2727, cysteine 2733, cysteine 2736, histidine 2742, and histidine 2746. The region spanning 2760–2937 (FCGRSGKQLK…ASDNEEEEDD (178 aa)) is the DOC domain. Positions 2928-2947 (ASDNEEEEDDKGSTGSLIRK) are disordered. Position 2929 is a phosphoserine (serine 2929). One copy of the RCC1 2-1 repeat lies at 2959–3010 (RTKVFVWGLNDKDQLGGLKGSKIKVPSFSETLSALNVVQVAGGSKSLFAVTV). The stretch at 3011 to 3065 (EGKVYSCGEATNGRLGLGMSSGTVPIPRQITALSSYVVKKVAVHSGGRHATALTV) is one RCC1 2-2 repeat. Residues 3066–3117 (DGKVFSWGEGDDGKLGHFSRMNCDKPRLIEALKTKRIRDIACGSSHSAALTS) form an RCC1 2-3 repeat. Residues 3119–3169 (GELYTWGLGEYGRLGHGDNTTQLKPKMVKVLLGHRVIQVACGSRDAQTLAL) form an RCC1 2-4 repeat. The RCC1 2-5 repeat unit spans residues 3172 to 3223 (EGLVFSWGDGDFGKLGRGGSEGCNIPQNIERLNGQGVCQIECGAQFSLALTK). An RCC1 2-6 repeat occupies 3225–3275 (GVVWTWGKGDYFRLGHGSDVHVRKPQVVEGLRGKKIVHVAVGALHCLAVTD). The RCC1 2-7 repeat unit spans residues 3276–3327 (SGQVYAWGDNDHGQQGNGTTTVNRKPTLVQGLEGQKITRVACGSSHSVAWTT). 3 disordered regions span residues 3479–3499 (DAVTPSAVTPSAPSASSRPFI), 3517–3537 (KTKEDVESQNKTSGPEPQSLD), and 3604–3632 (SQSGRLSSQPVVVESSHPYTDDTSTSGTV). Residues 3480–3495 (AVTPSAVTPSAPSASS) show a composition bias toward low complexity. Polar residues-rich tracts occupy residues 3604 to 3613 (SQSGRLSSQP) and 3620 to 3631 (HPYTDDTSTSGT). The stretch at 3953–4004 (SGTIYGWGHNHRGQLGGIEGAKVKVPTPCEALATLRPVQLIGGEQTLFAVTA) is one RCC1 3-1 repeat. The RCC1 3-2 repeat unit spans residues 4006–4058 (GKLYATGYGAGGRLGIGGTESVSTPTLLESIQHVFIKKVAVNSGGKHCLALSS). An RCC1 3-3 repeat occupies 4060-4110 (GEVYSWGEAEDGKLGHGNRSPCDRPRVIESLRGIEVVDVAAGGAHSACVTA). The stretch at 4112–4164 (GDLYTWGKGRYGRLGHSDSEDQLKPKLVEALQGHRVIDIACGSGDAQTLCLTD) is one RCC1 3-4 repeat. The RCC1 3-5 repeat unit spans residues 4166–4216 (DTVWSWGDGDYGKLGRGGSDGCKVPMKIDSLTGLGVVKVECGSQFSVALTK). The RCC1 3-6 repeat unit spans residues 4218-4268 (GAVYTWGKGDYHRLGHGSDDHVRRPRQVQGLQGKKVIAIATGSLHCVCCTE). Residues 4270–4320 (GEVYTWGDNDEGQLGDGTTNAIQRPRLVAALQGKKVNRVACGSAHTLAWST) form an RCC1 3-7 repeat. Residues 4459–4796 (DSLLLPHRVW…IHFCKSIDTD (338 aa)) form the HECT domain. Cysteine 4764 acts as the Glycyl thioester intermediate in catalysis. The disordered stretch occupies residues 4806–4836 (EPAADDSSEDSDNEDADSFASDSTQDYLTGH). Residues 4808-4822 (AADDSSEDSDNEDAD) are compositionally biased toward acidic residues. Serine 4812, serine 4813, and serine 4816 each carry phosphoserine. Threonine 4829 bears the Phosphothreonine mark.

Interacts (when phosphorylated at Thr-4829 and sumoylated) with RNF8 (via FHA domain); this interaction increases after ionising radiation (IR) treatment. Interacts with XPA. Interacts with NEURL4. Via its interaction with NEURL4, may indirectly interact with CCP110 and CEP97. Post-translationally, phosphorylation at Thr-4829 is required for interaction with RNF8. Sumoylated with SUMO1 by PIAS4 in response to double-strand breaks (DSBs), promoting the interaction with RNF8. Highest levels are found in brain and testis with lower levels in heart, lung, liver, skeletal muscle and kidney. Little expression detected in spleen.

The protein localises to the cytoplasm. It is found in the cytoskeleton. Its subcellular location is the microtubule organizing center. The protein resides in the centrosome. It localises to the centriole. The protein localises to the nucleus. The catalysed reaction is S-ubiquitinyl-[E2 ubiquitin-conjugating enzyme]-L-cysteine + [acceptor protein]-L-lysine = [E2 ubiquitin-conjugating enzyme]-L-cysteine + N(6)-ubiquitinyl-[acceptor protein]-L-lysine.. The protein operates within protein modification; protein ubiquitination. E3 ubiquitin-protein ligase that regulates ubiquitin-dependent retention of repair proteins on damaged chromosomes. Recruited to sites of DNA damage in response to ionizing radiation (IR) and facilitates the assembly of UBE2N and RNF8 promoting DNA damage-induced formation of 'Lys-63'-linked ubiquitin chains. Acts as a mediator of binding specificity between UBE2N and RNF8. Involved in the maintenance of RNF168 levels. E3 ubiquitin-protein ligase that promotes the ubiquitination and proteasomal degradation of XPA which influences the circadian oscillation of DNA excision repair activity. By controlling the steady-state expression of the IGF1R receptor, indirectly regulates the insulin-like growth factor receptor signaling pathway. Also modulates iron metabolism by regulating the basal turnover of FBXL5. This chain is E3 ubiquitin-protein ligase HERC2, found in Mus musculus (Mouse).